A 511-amino-acid chain; its full sequence is Cytochrome P450 714C3 (511 aa).

Topologically, residues 1–6 (MEKLLA) are lumenal. Residues 7–27 (LIVVLVILLSLALFYLCNILW) form a helical; Signal-anchor for type III membrane protein membrane-spanning segment. The Cytoplasmic segment spans residues 28–511 (LRAVKIRKKL…GLPLMVTKLP (484 aa)). A heme-binding site is contributed by Cys-458.

It belongs to the cytochrome P450 family. The cofactor is heme.

It localises to the membrane. In Oryza sativa subsp. japonica (Rice), this protein is Cytochrome P450 714C3 (CYP714C3).